Here is an 825-residue protein sequence, read N- to C-terminus: Lon protease (825 aa).

A Lon N-terminal domain is found at 41 to 237 (LPIIFIPNTI…KVIQLLLEQK (197 aa)). 388 to 395 (GPPGTGKT) is a binding site for ATP. In terms of domain architecture, Lon proteolytic spans 625–805 (SNPPGVVTGL…DEVLYEALGL (181 aa)). Active-site residues include S711 and K754.

This sequence belongs to the peptidase S16 family. Homohexamer. Organized in a ring with a central cavity.

It localises to the cytoplasm. It catalyses the reaction Hydrolysis of proteins in presence of ATP.. Functionally, ATP-dependent serine protease that mediates the selective degradation of mutant and abnormal proteins as well as certain short-lived regulatory proteins. Required for cellular homeostasis and for survival from DNA damage and developmental changes induced by stress. Degrades polypeptides processively to yield small peptide fragments that are 5 to 10 amino acids long. Binds to DNA in a double-stranded, site-specific manner. In Methanosphaera stadtmanae (strain ATCC 43021 / DSM 3091 / JCM 11832 / MCB-3), this protein is Lon protease.